A 302-amino-acid polypeptide reads, in one-letter code: Mitochondrial glycine transporter (302 aa).

Solcar repeat units follow at residues 22–112 (HPVF…LKHH), 119–203 (PKPL…AKKL), and 213–297 (FSPV…MMEK). 6 consecutive transmembrane segments (helical) span residues 28–53 (FVCGSLSGTCSTLLFQPLDLVKTRIQ), 87–113 (GVSPSFLRCIPGVGLYFSTLYTLKHHF), 125–150 (VMLGAGSRTVAAVCMLPFTVVKTRYE), 178–201 (GLTATLMRDAPFSGIYLMFYTRAK), 217–243 (LNFSCGIVAGILASVATQPADVIKTHM), and 272–290 (GGVPRALRRTLMAAMAWTV).

It belongs to the mitochondrial carrier (TC 2.A.29) family. SLC25A38 subfamily.

It is found in the mitochondrion inner membrane. It catalyses the reaction glycine(in) = glycine(out). Mitochondrial glycine transporter that imports glycine into the mitochondrial matrix. Plays an important role in providing glycine for the first enzymatic step in heme biosynthesis, the condensation of glycine with succinyl-CoA to produce 5-aminolevulinate (ALA) in the mitochondrial matrix. Required during erythropoiesis. In terms of biological role, may play a role as pro-apoptotic protein that induces caspase-dependent apoptosis. This is Mitochondrial glycine transporter from Xenopus laevis (African clawed frog).